The following is a 140-amino-acid chain: 3-hydroxyacyl-[acyl-carrier-protein] dehydratase FabZ (140 aa).

Residue histidine 47 is part of the active site.

Belongs to the thioester dehydratase family. FabZ subfamily.

The protein localises to the cytoplasm. The enzyme catalyses a (3R)-hydroxyacyl-[ACP] = a (2E)-enoyl-[ACP] + H2O. Its function is as follows. Involved in unsaturated fatty acids biosynthesis. Catalyzes the dehydration of short chain beta-hydroxyacyl-ACPs and long chain saturated and unsaturated beta-hydroxyacyl-ACPs. This is 3-hydroxyacyl-[acyl-carrier-protein] dehydratase FabZ from Streptococcus sanguinis (strain SK36).